The sequence spans 176 residues: RNA pyrophosphohydrolase (176 aa).

One can recognise a Nudix hydrolase domain in the interval 6 to 149; the sequence is GYRPNVGIVI…KRDVYRRVMK (144 aa). The Nudix box signature appears at 38 to 59; the sequence is GGINPGESAEQAMYRELFEEVG.

The protein belongs to the Nudix hydrolase family. RppH subfamily. Requires a divalent metal cation as cofactor.

Accelerates the degradation of transcripts by removing pyrophosphate from the 5'-end of triphosphorylated RNA, leading to a more labile monophosphorylated state that can stimulate subsequent ribonuclease cleavage. The polypeptide is RNA pyrophosphohydrolase (Klebsiella pneumoniae (strain 342)).